The chain runs to 506 residues: Maturase K (506 aa).

This sequence belongs to the intron maturase 2 family. MatK subfamily.

The protein localises to the plastid. It is found in the chloroplast. Functionally, usually encoded in the trnK tRNA gene intron. Probably assists in splicing its own and other chloroplast group II introns. This chain is Maturase K, found in Empetrum nigrum (Black crowberry).